A 115-amino-acid chain; its full sequence is Large ribosomal subunit protein uL22 (115 aa).

Belongs to the universal ribosomal protein uL22 family. As to quaternary structure, part of the 50S ribosomal subunit.

Its function is as follows. This protein binds specifically to 23S rRNA; its binding is stimulated by other ribosomal proteins, e.g. L4, L17, and L20. It is important during the early stages of 50S assembly. It makes multiple contacts with different domains of the 23S rRNA in the assembled 50S subunit and ribosome. The globular domain of the protein is located near the polypeptide exit tunnel on the outside of the subunit, while an extended beta-hairpin is found that lines the wall of the exit tunnel in the center of the 70S ribosome. The chain is Large ribosomal subunit protein uL22 (rplV) from Wolbachia pipientis wMel.